A 325-amino-acid polypeptide reads, in one-letter code: Gamma-hemolysin component B (325 aa).

The first 25 residues, 1–25 (MNMNKLVKSSVATSMALLLLSNTAN), serve as a signal peptide directing secretion.

The protein belongs to the aerolysin family. In terms of assembly, toxicity requires sequential binding and synergistic association of a class S and a class F component which form heterooligomeric complexes. HlgB (class F) associates with either hlgA thus forming an AB toxin or with hlgC thus forming a CB toxin. Interacts with host AMFR.

In terms of biological role, toxin that seems to act by forming pores in the membrane of the cell. Has a hemolytic and a leucotoxic activity. Promotes host AMFR-mediated inflammation by mediating 'Lys-27'-linked ubiquitination of TAB3, TAK1-TAB3 complex formation and phosphorylation of TAK1/MAP3K7. In turn, activates host NF-kappa-B signaling pathway. The sequence is that of Gamma-hemolysin component B (hlgB) from Staphylococcus aureus (strain MRSA252).